Consider the following 151-residue polypeptide: Deoxyuridine 5'-triphosphate nucleotidohydrolase (151 aa).

Residues 70–72 (RSG), N83, 87–89 (LID), and M97 contribute to the substrate site.

This sequence belongs to the dUTPase family. It depends on Mg(2+) as a cofactor.

It carries out the reaction dUTP + H2O = dUMP + diphosphate + H(+). Its pathway is pyrimidine metabolism; dUMP biosynthesis; dUMP from dCTP (dUTP route): step 2/2. In terms of biological role, this enzyme is involved in nucleotide metabolism: it produces dUMP, the immediate precursor of thymidine nucleotides and it decreases the intracellular concentration of dUTP so that uracil cannot be incorporated into DNA. The polypeptide is Deoxyuridine 5'-triphosphate nucleotidohydrolase (Shigella flexneri serotype 5b (strain 8401)).